The sequence spans 96 residues: Seed trypsin/chymotrypsin inhibitor IVA (96 aa).

A signal peptide spans 1–10 (LSFAANVVNA). The propeptide occupies 11 to 24 (RFDSTSFITQVLSN). 7 disulfides stabilise this stretch: C32-C85, C33-C48, C36-C81, C38-C46, C55-C62, C59-C74, and C64-C72. Residues 88–96 (SEVEEVIKN) constitute a propeptide, removed in PSTI I.

It belongs to the Bowman-Birk serine protease inhibitor family. As to expression, seed.

In terms of biological role, inhibitor of trypsin and of chymotrypsin. May function as a natural phytochemical defense against predators. This is Seed trypsin/chymotrypsin inhibitor IVA (TI1236) from Pisum sativum (Garden pea).